An 88-amino-acid chain; its full sequence is Insertion element ISR1 uncharacterized 10 kDa protein A3 (88 aa).

The protein belongs to the transposase 8 family.

This chain is Insertion element ISR1 uncharacterized 10 kDa protein A3, found in Rhizobium sp.